Here is a 308-residue protein sequence, read N- to C-terminus: MNHFLDIHKTDTAELRQMMDSAHAMKAARKGRPKGQLDEDQPLAGRMVALIFEKPSTRTRVSFDVGVRQMGGQTMVLSGKEMQLGHGETIADTARVLSRYVDLIMIRTFEEATLLEMAEHATVPVINGLTNRTHPCQIMADVMTYEEHRGPIAGRKVVWAGDGNNVCASFLHAAGQFGFDFTFTGPSTLDPEAEFVGYAREKGRRVSIERDPAKAVAGADLVVTDTWVSMHDPQSARERRHNQLRPYQVNEALMAQAKPDALFMHCLPAHRDDEATSAVMDGPHSVIFDEAENRLHAQKAIMRWCLGL.

Residues 56-59 (STRT), Q83, R107, and 134-137 (HPCQ) each bind carbamoyl phosphate. L-ornithine-binding positions include N165, D225, and 229–230 (SM). Residues 266–267 (CL) and R294 each bind carbamoyl phosphate.

Belongs to the aspartate/ornithine carbamoyltransferase superfamily. OTCase family.

The protein resides in the cytoplasm. It catalyses the reaction carbamoyl phosphate + L-ornithine = L-citrulline + phosphate + H(+). It participates in amino-acid biosynthesis; L-arginine biosynthesis; L-arginine from L-ornithine and carbamoyl phosphate: step 1/3. Its function is as follows. Reversibly catalyzes the transfer of the carbamoyl group from carbamoyl phosphate (CP) to the N(epsilon) atom of ornithine (ORN) to produce L-citrulline. The protein is Ornithine carbamoyltransferase of Cereibacter sphaeroides (strain ATCC 17029 / ATH 2.4.9) (Rhodobacter sphaeroides).